The primary structure comprises 760 residues: MRTSPRRPLILKRRRLPLPVQNAPSETSEEEAKRSPAQPEPAPAQASQEVAESSSCKFPAGIKIINHPTTPNTQVVAIPSNADIQSIITALTAKGKESGTSGPNRFILISSGGPSSHPSQPQAHSSRDSKRAEVITETLGPKPAAKGVPVPKPPGAPPRQRQESYAGGEAAGCTLDNSLTNIQWLGKMSSDGLGPCSVKQELEEKENCHLEQNRVKVEEPSGVSTSWQDSVSERPPYSYMAMIQFAINSTERKRMTLKDIYTWIEDHFPYFKHIAKPGWKNSIRHNLSLHDMFVRETSANGKVSFWTIHPSANRHLTLDQVFKPLEPGSPQSPEHLESQQKRPNPELHRNVTIKTEIPLGARRKMKPLLPRVSSYLEPIQFPVNQSLVLQPSVKVPFRLAASLMSSELARHSKRVRIAPKVLLSSEGIAPLPATEPPKEEKPLLGGEGLLPLLPIQSIKEEEMQPEEDIAHLERPIKVESPPLEEWPSPCASLKEELSNSWEDSSCSPTPKPKKSYCGLKSPTRCVSEMLVTKRREKREVSRSRRKQHLQPPCLDEPDLFFPEDSSTFRPAVELLAESSEPAPHLSCPQEEGGPFKTPIKETLPVSSTPSKSVLSRDPESWRLTPPAKVGGLDFSPVRTPQGAFGLLPDSLGLMELNTTPLKSGPLFDSPRELLNSEPFDLASDPFGSPPPPHVEGPKPGSPELQIPSLSANRSLTEGLVLDTMNDSLSKILLDISFPGLEEDPLGPDNINWSQFIPELR.

2 disordered regions span residues 1 to 54 (MRTS…AESS) and 95 to 167 (GKES…SYAG). Composition is skewed to low complexity over residues 43-54 (PAQASQEVAESS) and 110-124 (SSGG…PQAH). The span at 125–134 (SSRDSKRAEV) shows a compositional bias: basic and acidic residues. A compositionally biased stretch (low complexity) spans 140 to 149 (GPKPAAKGVP). Residues Lys-199 and Lys-323 each participate in a glycyl lysine isopeptide (Lys-Gly) (interchain with G-Cter in SUMO2) cross-link. Residues 233–325 (ERPPYSYMAM…LTLDQVFKPL (93 aa)) constitute a DNA-binding region (fork-head). The interval 323–348 (KPLEPGSPQSPEHLESQQKRPNPELH) is disordered. The residue at position 329 (Ser-329) is a Phosphoserine. Residues 334–348 (EHLESQQKRPNPELH) show a composition bias toward basic and acidic residues. Residue Lys-354 forms a Glycyl lysine isopeptide (Lys-Gly) (interchain with G-Cter in SUMO2) linkage. Ser-374 is modified (phosphoserine; by CHEK2). Glycyl lysine isopeptide (Lys-Gly) (interchain with G-Cter in SUMO2) cross-links involve residues Lys-420 and Lys-438. Disordered regions lie at residues 500-560 (SWED…PDLF), 577-635 (ESSE…LDFS), and 660-709 (PLKS…IPSL). At Ser-521 the chain carries Phosphoserine. A compositionally biased stretch (basic and acidic residues) spans 531 to 542 (VTKRREKREVSR). Residues 604 to 613 (PVSSTPSKSV) show a composition bias toward polar residues. A Phosphothreonine; by CDK1 modification is found at Thr-608. Thr-624 is subject to Phosphothreonine. Ser-727 and Ser-736 each carry phosphoserine; by PLK1.

Post-translationally, phosphorylated in M (mitotic) phase. Phosphorylation by the checkpoint kinase CHEK2 in response to DNA damage increases the FOXM1 protein stability probably stimulating the transcription of genes involved in DNA repair. Phosphorylated by CDK1 in late S and G2 phases, creating docking sites for the POLO box domains of PLK1. Subsequently, PLK1 binds and phosphorylates FOXM1, leading to activation of transcriptional activity and subsequent enhanced expression of key mitotic regulators. Phosphorylated by GSK3B leading to ubiquitination and proteasomal degradation. As to expression, expressed in fetal heart, brain, liver, lung, kidney and limb, but only in adult thymus. Appears to be expressed only in adult organs containing proliferating/cycling cells or in response to growth factors.

It localises to the nucleus. Transcription factor regulating the expression of cell cycle genes essential for DNA replication and mitosis. Plays a role in the control of cell proliferation. Also plays a role in DNA break repair, participating in the DNA damage checkpoint response. Promotes transcription of PHB2. This chain is Forkhead box protein M1 (Foxm1), found in Mus musculus (Mouse).